We begin with the raw amino-acid sequence, 335 residues long: Nod factor export ATP-binding protein I (335 aa).

The ABC transporter domain occupies 37–267 (IDVASVTKSY…KIGCQVIEIY (231 aa)). 69-76 (GPNGAGKS) contacts ATP.

The protein belongs to the ABC transporter superfamily. Lipooligosaccharide exporter (TC 3.A.1.102) family. The complex is composed of two ATP-binding proteins (NodI) and two transmembrane proteins (NodJ).

It localises to the cell inner membrane. Functionally, part of the ABC transporter complex NodIJ involved in the export of the nodulation factors (Nod factors), the bacterial signal molecules that induce symbiosis and subsequent nodulation induction. Nod factors are LCO (lipo-chitin oligosaccharide), a modified beta-1,4-linked N-acetylglucosamine oligosaccharide. This subunit is responsible for energy coupling to the transport system. The chain is Nod factor export ATP-binding protein I from Rhizobium meliloti (strain 1021) (Ensifer meliloti).